We begin with the raw amino-acid sequence, 546 residues long: Chaperonin GroEL (546 aa).

ATP is bound by residues 29-32, Lys-50, 86-90, Gly-414, and Asp-494; these read TLGP and DGTTT. Residues 525-546 form a disordered region; sequence KKESAAPAMPGHDGMGGMGGMM. The segment covering 537–546 has biased composition (gly residues); the sequence is DGMGGMGGMM.

It belongs to the chaperonin (HSP60) family. Forms a cylinder of 14 subunits composed of two heptameric rings stacked back-to-back. Interacts with the co-chaperonin GroES.

It localises to the cytoplasm. The catalysed reaction is ATP + H2O + a folded polypeptide = ADP + phosphate + an unfolded polypeptide.. Functionally, together with its co-chaperonin GroES, plays an essential role in assisting protein folding. The GroEL-GroES system forms a nano-cage that allows encapsulation of the non-native substrate proteins and provides a physical environment optimized to promote and accelerate protein folding. The polypeptide is Chaperonin GroEL (Bdellovibrio bacteriovorus (strain ATCC 15356 / DSM 50701 / NCIMB 9529 / HD100)).